A 326-amino-acid polypeptide reads, in one-letter code: Protein FAM50 homolog (326 aa).

Residues 77-111 (ISNRDLQVARGDQSSSTQSKDSQEAREKEEHVAKH) form a disordered region. Positions 97-109 (DSQEAREKEEHVA) are enriched in basic and acidic residues.

It belongs to the FAM50 family.

This chain is Protein FAM50 homolog, found in Caenorhabditis elegans.